Consider the following 144-residue polypeptide: Transcription antitermination protein NusB (144 aa).

This sequence belongs to the NusB family.

In terms of biological role, involved in transcription antitermination. Required for transcription of ribosomal RNA (rRNA) genes. Binds specifically to the boxA antiterminator sequence of the ribosomal RNA (rrn) operons. The polypeptide is Transcription antitermination protein NusB (Dictyoglomus turgidum (strain DSM 6724 / Z-1310)).